The following is a 188-amino-acid chain: Pyridoxal 5'-phosphate synthase subunit PdxT (188 aa).

Glycine 46–serine 48 provides a ligand contact to L-glutamine. Catalysis depends on cysteine 78, which acts as the Nucleophile. L-glutamine is bound by residues arginine 106 and isoleucine 132–arginine 133. Active-site charge relay system residues include histidine 169 and glutamate 171.

This sequence belongs to the glutaminase PdxT/SNO family. In terms of assembly, in the presence of PdxS, forms a dodecamer of heterodimers. Only shows activity in the heterodimer.

The enzyme catalyses aldehydo-D-ribose 5-phosphate + D-glyceraldehyde 3-phosphate + L-glutamine = pyridoxal 5'-phosphate + L-glutamate + phosphate + 3 H2O + H(+). The catalysed reaction is L-glutamine + H2O = L-glutamate + NH4(+). It functions in the pathway cofactor biosynthesis; pyridoxal 5'-phosphate biosynthesis. Its function is as follows. Catalyzes the hydrolysis of glutamine to glutamate and ammonia as part of the biosynthesis of pyridoxal 5'-phosphate. The resulting ammonia molecule is channeled to the active site of PdxS. The sequence is that of Pyridoxal 5'-phosphate synthase subunit PdxT from Tropheryma whipplei (strain Twist) (Whipple's bacillus).